Reading from the N-terminus, the 341-residue chain is S-adenosylmethionine:tRNA ribosyltransferase-isomerase (341 aa).

The protein belongs to the QueA family. As to quaternary structure, monomer.

It is found in the cytoplasm. The catalysed reaction is 7-aminomethyl-7-carbaguanosine(34) in tRNA + S-adenosyl-L-methionine = epoxyqueuosine(34) in tRNA + adenine + L-methionine + 2 H(+). The protein operates within tRNA modification; tRNA-queuosine biosynthesis. In terms of biological role, transfers and isomerizes the ribose moiety from AdoMet to the 7-aminomethyl group of 7-deazaguanine (preQ1-tRNA) to give epoxyqueuosine (oQ-tRNA). The protein is S-adenosylmethionine:tRNA ribosyltransferase-isomerase of Staphylococcus haemolyticus (strain JCSC1435).